A 464-amino-acid chain; its full sequence is GDNF family receptor alpha-2 (464 aa).

The signal sequence occupies residues 1-21 (MILANAFCLFFFLDETLRSLA). 14 disulfides stabilise this stretch: cysteine 40–cysteine 93, cysteine 47–cysteine 53, cysteine 63–cysteine 78, cysteine 95–cysteine 105, cysteine 161–cysteine 222, cysteine 168–cysteine 174, cysteine 185–cysteine 200, cysteine 195–cysteine 241, cysteine 224–cysteine 229, cysteine 251–cysteine 323, cysteine 258–cysteine 264, cysteine 275–cysteine 293, cysteine 285–cysteine 347, and cysteine 325–cysteine 335. N-linked (GlcNAc...) asparagine glycosylation occurs at asparagine 52. N-linked (GlcNAc...) asparagine glycosylation occurs at asparagine 357. The span at 360-374 (DVNLSPKSPPFQATQ) shows a compositional bias: polar residues. The interval 360 to 392 (DVNLSPKSPPFQATQAPRVDKTPSLPDDLSDST) is disordered. The segment covering 381-392 (TPSLPDDLSDST) has biased composition (low complexity). The N-linked (GlcNAc...) asparagine glycan is linked to asparagine 413. Asparagine 440 is lipidated: GPI-anchor amidated asparagine. Positions 441–464 (SGPRRTRPSAALTAASFLMLKLAL) are cleaved as a propeptide — removed in mature form.

The protein belongs to the GDNFR family. As to quaternary structure, interacts with NRTN ligand and RET: forms a 2:2:2 ternary complex composed of NRTN ligand, GFRA2 and RET receptor. Also forms a 4:4:4 tetrameric complex composed of 4 copies of NRTN ligand, GFRA2 and RET receptor, which prevents endocytosis of RET. Interacts with SORL1.

The protein localises to the cell membrane. Functionally, receptor for neurturin (NRTN), a growth factor that supports the survival of sympathetic neurons. NRTN-binding leads to autophosphorylation and activation of the RET receptor. Also able to mediate GDNF signaling through the RET tyrosine kinase receptor. This chain is GDNF family receptor alpha-2 (GFRA2), found in Bos taurus (Bovine).